A 336-amino-acid polypeptide reads, in one-letter code: Large ribosomal subunit protein uL1m (336 aa).

Residues Met1–Ala50 constitute a mitochondrion transit peptide. Ser85 is modified (phosphoserine).

The protein belongs to the universal ribosomal protein uL1 family.

It localises to the mitochondrion. The polypeptide is Large ribosomal subunit protein uL1m (Mrpl1) (Mus musculus (Mouse)).